We begin with the raw amino-acid sequence, 792 residues long: Phenylalanine--tRNA ligase beta subunit (792 aa).

In terms of domain architecture, tRNA-binding spans 39–147 (GESLGQVVVA…DDAPVGQALA (109 aa)). One can recognise a B5 domain in the interval 400-475 (PQPVHIRLRR…RIHGYDRVPT (76 aa)). Mg(2+) contacts are provided by Asp-453, Asp-459, Glu-462, and Glu-463. The FDX-ACB domain occupies 698 to 791 (SRFPSVRRDL…IEREHRARIR (94 aa)).

It belongs to the phenylalanyl-tRNA synthetase beta subunit family. Type 1 subfamily. Tetramer of two alpha and two beta subunits. The cofactor is Mg(2+).

Its subcellular location is the cytoplasm. It carries out the reaction tRNA(Phe) + L-phenylalanine + ATP = L-phenylalanyl-tRNA(Phe) + AMP + diphosphate + H(+). This Xanthomonas axonopodis pv. citri (strain 306) protein is Phenylalanine--tRNA ligase beta subunit.